Reading from the N-terminus, the 325-residue chain is Acetyl-coenzyme A carboxylase carboxyl transferase subunit alpha (325 aa).

A CoA carboxyltransferase C-terminal domain is found at 44–298; it reads QLEGRAEQLR…KTAILSNLEE (255 aa).

The protein belongs to the AccA family. In terms of assembly, acetyl-CoA carboxylase is a heterohexamer composed of biotin carboxyl carrier protein (AccB), biotin carboxylase (AccC) and two subunits each of ACCase subunit alpha (AccA) and ACCase subunit beta (AccD).

The protein resides in the cytoplasm. It carries out the reaction N(6)-carboxybiotinyl-L-lysyl-[protein] + acetyl-CoA = N(6)-biotinyl-L-lysyl-[protein] + malonyl-CoA. It participates in lipid metabolism; malonyl-CoA biosynthesis; malonyl-CoA from acetyl-CoA: step 1/1. In terms of biological role, component of the acetyl coenzyme A carboxylase (ACC) complex. First, biotin carboxylase catalyzes the carboxylation of biotin on its carrier protein (BCCP) and then the CO(2) group is transferred by the carboxyltransferase to acetyl-CoA to form malonyl-CoA. This Acaryochloris marina (strain MBIC 11017) protein is Acetyl-coenzyme A carboxylase carboxyl transferase subunit alpha.